A 330-amino-acid chain; its full sequence is Probable WRKY transcription factor 74 (330 aa).

The WRKY DNA-binding region spans 256–322 (KIADIPPDEY…YEGEHNHSRI (67 aa)).

Its subcellular location is the nucleus. Its function is as follows. Transcription factor. Interacts specifically with the W box (5'-(T)TGAC[CT]-3'), a frequently occurring elicitor-responsive cis-acting element. The sequence is that of Probable WRKY transcription factor 74 (WRKY74) from Arabidopsis thaliana (Mouse-ear cress).